The primary structure comprises 101 residues: Small ribosomal subunit protein uS14 (101 aa).

It belongs to the universal ribosomal protein uS14 family. As to quaternary structure, part of the 30S ribosomal subunit. Contacts proteins S3 and S10.

Its function is as follows. Binds 16S rRNA, required for the assembly of 30S particles and may also be responsible for determining the conformation of the 16S rRNA at the A site. This is Small ribosomal subunit protein uS14 from Chromobacterium violaceum (strain ATCC 12472 / DSM 30191 / JCM 1249 / CCUG 213 / NBRC 12614 / NCIMB 9131 / NCTC 9757 / MK).